Consider the following 62-residue polypeptide: Large ribosomal subunit protein bL32 (62 aa).

The segment covering 1 to 19 (MAVPKRKTSKTRRDKRRAS) has biased composition (basic residues). The interval 1–20 (MAVPKRKTSKTRRDKRRASS) is disordered.

Belongs to the bacterial ribosomal protein bL32 family.

This is Large ribosomal subunit protein bL32 from Finegoldia magna (strain ATCC 29328 / DSM 20472 / WAL 2508) (Peptostreptococcus magnus).